The primary structure comprises 396 residues: Gamma-D-glutamyl-L-diamino acid endopeptidase 1 (396 aa).

LysM domains lie at 1–45 (MDIL…RIQI) and 51–95 (TSYT…TIQV). In terms of domain architecture, Peptidase M14 spans 108-394 (QNYDYSMMMN…EALGIFLAGL (287 aa)). The Zn(2+) site is built by H162 and E165. A substrate-binding site is contributed by D255. Residue H307 participates in Zn(2+) binding. The active-site Proton donor is the Y347. The active-site Proton donor/acceptor is E366.

The protein belongs to the peptidase M14 family. It depends on Zn(2+) as a cofactor.

It carries out the reaction Hydrolysis of gamma-D-glutamyl bonds to the L-terminus (position 7) of meso-diaminopimelic acid (meso-A2pm) in 7-(L-Ala-gamma-D-Glu)-meso-A2pm and 7-(L-Ala-gamma-D-Glu)-7-(D-Ala)-meso-A2pm. It is required that the D-terminal amino and carboxy groups of meso-A2pm are unsubstituted.. Its function is as follows. An endopeptidase which hydrolyzes the gamma-D-Glu-(L)meso-diaminopimelic acid bond of L-Ala-gamma-D-Glu-(L)meso-diaminopimelic acid and L-Ala-gamma-D-Glu-(L)meso-diaminopimelic acid(L)-D-Ala peptides. It is active on spore cortex peptidoglycan. The sequence is that of Gamma-D-glutamyl-L-diamino acid endopeptidase 1 from Lysinibacillus sphaericus (Bacillus sphaericus).